The primary structure comprises 76 residues: Large ribosomal subunit protein eL20 (76 aa).

This sequence belongs to the eukaryotic ribosomal protein eL20 family. Part of the 50S ribosomal subunit. Binds 23S rRNA.

In Methanococcus maripaludis (strain C6 / ATCC BAA-1332), this protein is Large ribosomal subunit protein eL20.